Here is a 147-residue protein sequence, read N- to C-terminus: Hemoglobin subunit gamma (147 aa).

The 145-residue stretch at 3–147 (HFTEEDKATI…VASALSSRYH (145 aa)) folds into the Globin domain. Residues His64 and His93 each contribute to the heme b site.

It belongs to the globin family. In terms of assembly, heterotetramer of two alpha chains and two gamma chains in fetal hemoglobin (Hb F). Red blood cells.

Functionally, gamma chains make up the fetal hemoglobin F, in combination with alpha chains. This chain is Hemoglobin subunit gamma (HBG), found in Macaca fuscata fuscata (Japanese macaque).